Reading from the N-terminus, the 203-residue chain is Inositol diphosphatase DSP3 (203 aa).

The region spanning 20-169 (NFSMVEDGIY…FDIVSLRQCL (150 aa)) is the Tyrosine-protein phosphatase domain. Residues 76-88 (FGIEGKTDPPTPM) are WPD loop important for active site topology. The Phosphocysteine intermediate role is filled by C112.

Belongs to the protein-tyrosine phosphatase family. Atypical dual-specificity phosphatase Siw14-like subfamily. In terms of assembly, interacts with FLZ1. Highly expressed in roots, stems and flowers. Expressed at low levels in leaves and siliques.

It localises to the nucleus. The catalysed reaction is 5-diphospho-1D-myo-inositol 1,2,3,4,6-pentakisphosphate + H2O = 1D-myo-inositol hexakisphosphate + phosphate + H(+). It catalyses the reaction 1,5-bis(diphospho)-1D-myo-inositol 2,3,4,6-tetrakisphosphate + H2O = 1-diphospho-1D-myo-inositol 2,3,4,5,6-pentakisphosphate + phosphate + 2 H(+). It carries out the reaction 3,5-bis(diphospho)-1D-myo-inositol 1,2,4,6-tetrakisphosphate + H2O = 3-diphospho-1D-myo-inositol 1,2,4,5,6-pentakisphosphate + phosphate + 2 H(+). The enzyme catalyses 6-diphospho-1D-myo-inositol pentakisphosphate + H2O = 1D-myo-inositol hexakisphosphate + phosphate + H(+). Its function is as follows. Cleaves the beta-phosphate at the 5-position of soluble inositol pyrophosphates. Has highest activity on 5-diphosphoinositol 1,2,3,4,6-pentakisphosphate (5-InsP(7)), 1,5-bis-diphosphoinositol 2,3,4,6-tetrakisphosphate (1,5-InsP(8)) and 3,5-InsP(8). Possesses phosphotyrosine phosphatase activity in vitro. Dephosphorylates the phosphoinositides PI(3,5)P2. Hydrolyzes para-nitrophenyl phosphate and O-methylfluorescein phosphate in vitro. This is Inositol diphosphatase DSP3 from Arabidopsis thaliana (Mouse-ear cress).